The chain runs to 292 residues: UPF0761 membrane protein Ping_3482 (292 aa).

6 consecutive transmembrane segments (helical) span residues 43–63 (LLSI…FPVF), 100–120 (MSMM…STID), 139–159 (FTIY…SLAL), 179–199 (LLSL…YTLV), 209–229 (ALIG…LFRL), and 243–263 (ALAV…IVLI).

It belongs to the UPF0761 family.

It localises to the cell inner membrane. The protein is UPF0761 membrane protein Ping_3482 of Psychromonas ingrahamii (strain DSM 17664 / CCUG 51855 / 37).